We begin with the raw amino-acid sequence, 201 residues long: Testis-expressed protein 38 (201 aa).

A helical membrane pass occupies residues 3-23; it reads ISLCIGFLGLCSVLIGSCILF.

The protein resides in the membrane. The polypeptide is Testis-expressed protein 38 (Tex38) (Mus musculus (Mouse)).